Reading from the N-terminus, the 86-residue chain is Putative antitoxin VapB5 (86 aa).

The protein belongs to the phD/YefM antitoxin family. Forms a complex with VapC5.

Probable antitoxin component of a probable type II toxin-antitoxin (TA) system. The cognate toxin is VapC5. This is Putative antitoxin VapB5 (vapB5) from Mycobacterium tuberculosis (strain CDC 1551 / Oshkosh).